A 165-amino-acid polypeptide reads, in one-letter code: Nucleotide-binding protein Tfu_2672 (165 aa).

The protein belongs to the YajQ family.

In terms of biological role, nucleotide-binding protein. This chain is Nucleotide-binding protein Tfu_2672, found in Thermobifida fusca (strain YX).